We begin with the raw amino-acid sequence, 304 residues long: Gamma-gliadin B-I (304 aa).

A signal peptide spans 1–23; sequence MKTFLVFALIAVVATSAIAQMET. The interval 32–92 is disordered; the sequence is PWQQQPLPPQ…PFSQQQQPVL (61 aa). Residues 41-92 are compositionally biased toward low complexity; the sequence is QQSFSQQPPFSQQQQQPLPQQPSFSQQQPPFSQQQPILSQQPPFSQQQQPVL.

The protein belongs to the gliadin/glutenin family.

In terms of biological role, gliadin is the major seed storage protein in wheat. The polypeptide is Gamma-gliadin B-I (Triticum aestivum (Wheat)).